The chain runs to 202 residues: Dephospho-CoA kinase (202 aa).

Residues 5–202 enclose the DPCK domain; the sequence is IVGLTGGIAS…DADYRARANP (198 aa). An ATP-binding site is contributed by 13-18; it reads ASGKSA.

The protein belongs to the CoaE family.

The protein resides in the cytoplasm. The enzyme catalyses 3'-dephospho-CoA + ATP = ADP + CoA + H(+). Its pathway is cofactor biosynthesis; coenzyme A biosynthesis; CoA from (R)-pantothenate: step 5/5. In terms of biological role, catalyzes the phosphorylation of the 3'-hydroxyl group of dephosphocoenzyme A to form coenzyme A. This chain is Dephospho-CoA kinase, found in Xanthomonas axonopodis pv. citri (strain 306).